A 296-amino-acid polypeptide reads, in one-letter code: Glycine--tRNA ligase alpha subunit (296 aa).

It belongs to the class-II aminoacyl-tRNA synthetase family. In terms of assembly, tetramer of two alpha and two beta subunits.

The protein localises to the cytoplasm. It carries out the reaction tRNA(Gly) + glycine + ATP = glycyl-tRNA(Gly) + AMP + diphosphate. This chain is Glycine--tRNA ligase alpha subunit, found in Exiguobacterium sibiricum (strain DSM 17290 / CCUG 55495 / CIP 109462 / JCM 13490 / 255-15).